The primary structure comprises 233 residues: Octanoyltransferase (233 aa).

The 176-residue stretch at 36 to 211 (DTTPDEIWLV…EFTRQLGYPT (176 aa)) folds into the BPL/LPL catalytic domain. Substrate-binding positions include 75-82 (RGGQVTYH), 142-144 (SLG), and 155-157 (GLA). The active-site Acyl-thioester intermediate is the Cys173.

This sequence belongs to the LipB family.

Its subcellular location is the cytoplasm. It catalyses the reaction octanoyl-[ACP] + L-lysyl-[protein] = N(6)-octanoyl-L-lysyl-[protein] + holo-[ACP] + H(+). Its pathway is protein modification; protein lipoylation via endogenous pathway; protein N(6)-(lipoyl)lysine from octanoyl-[acyl-carrier-protein]: step 1/2. Catalyzes the transfer of endogenously produced octanoic acid from octanoyl-acyl-carrier-protein onto the lipoyl domains of lipoate-dependent enzymes. Lipoyl-ACP can also act as a substrate although octanoyl-ACP is likely to be the physiological substrate. The polypeptide is Octanoyltransferase (Yersinia pestis bv. Antiqua (strain Antiqua)).